Reading from the N-terminus, the 103-residue chain is Cytochrome c-552 (103 aa).

The first 22 residues, 1–22, serve as a signal peptide directing secretion; it reads MKTAWLGTFAASALLVAGYAQA. Residues Cys32, Cys35, His36, and Met81 each coordinate heme c.

In terms of assembly, monomer. In terms of processing, binds 1 heme c group covalently per subunit.

It is found in the periplasm. In terms of biological role, monoheme c-type cytochrome. Probable electron donor to membrane cytochrome oxidase and to periplasmic nitrite reductase. This is Cytochrome c-552 (cyt) from Nitrosomonas europaea (strain ATCC 19718 / CIP 103999 / KCTC 2705 / NBRC 14298).